A 152-amino-acid polypeptide reads, in one-letter code: 1,4-dihydroxy-2-naphthoyl-CoA hydrolase (152 aa).

D20 is a catalytic residue.

The protein belongs to the 4-hydroxybenzoyl-CoA thioesterase family. DHNA-CoA hydrolase subfamily.

The catalysed reaction is 1,4-dihydroxy-2-naphthoyl-CoA + H2O = 1,4-dihydroxy-2-naphthoate + CoA + H(+). It functions in the pathway cofactor biosynthesis; phylloquinone biosynthesis. The protein operates within quinol/quinone metabolism; 1,4-dihydroxy-2-naphthoate biosynthesis; 1,4-dihydroxy-2-naphthoate from chorismate: step 7/7. Functionally, catalyzes the hydrolysis of 1,4-dihydroxy-2-naphthoyl-CoA (DHNA-CoA) to 1,4-dihydroxy-2-naphthoate (DHNA), a reaction involved in phylloquinone (vitamin K1) biosynthesis. This is 1,4-dihydroxy-2-naphthoyl-CoA hydrolase from Parasynechococcus marenigrum (strain WH8102).